A 209-amino-acid chain; its full sequence is Large ribosomal subunit protein uL3 (209 aa).

Position 150 is an N5-methylglutamine (glutamine 150).

Belongs to the universal ribosomal protein uL3 family. As to quaternary structure, part of the 50S ribosomal subunit. Forms a cluster with proteins L14 and L19. Methylated by PrmB.

In terms of biological role, one of the primary rRNA binding proteins, it binds directly near the 3'-end of the 23S rRNA, where it nucleates assembly of the 50S subunit. This is Large ribosomal subunit protein uL3 from Salmonella arizonae (strain ATCC BAA-731 / CDC346-86 / RSK2980).